A 143-amino-acid polypeptide reads, in one-letter code: Large ribosomal subunit protein eL28y (143 aa).

It belongs to the eukaryotic ribosomal protein eL28 family.

The sequence is that of Large ribosomal subunit protein eL28y (RPL28C) from Arabidopsis thaliana (Mouse-ear cress).